A 307-amino-acid polypeptide reads, in one-letter code: N-acetylmuramic acid 6-phosphate etherase (307 aa).

Residues 59–222 enclose the SIS domain; sequence TTKALSQGGK…STGVMVRLGK (164 aa). Glutamate 87 functions as the Proton donor in the catalytic mechanism. Residue glutamate 118 is part of the active site.

The protein belongs to the GCKR-like family. MurNAc-6-P etherase subfamily. Homodimer.

It catalyses the reaction N-acetyl-D-muramate 6-phosphate + H2O = N-acetyl-D-glucosamine 6-phosphate + (R)-lactate. It participates in amino-sugar metabolism; N-acetylmuramate degradation. Specifically catalyzes the cleavage of the D-lactyl ether substituent of MurNAc 6-phosphate, producing GlcNAc 6-phosphate and D-lactate. The protein is N-acetylmuramic acid 6-phosphate etherase of Trichodesmium erythraeum (strain IMS101).